The chain runs to 122 residues: Venom protein 7.1 (122 aa).

Residues 1 to 19 (MRFSIISASLVLIFANVKA) form the signal peptide.

In terms of processing, contains 3 disulfide bonds. In terms of tissue distribution, expressed by the venom gland.

Its subcellular location is the secreted. This Lychas mucronatus (Chinese swimming scorpion) protein is Venom protein 7.1.